The following is a 171-amino-acid chain: S-ribosylhomocysteine lyase (171 aa).

Fe cation-binding residues include His-54, His-58, and Cys-128.

It belongs to the LuxS family. Homodimer. The cofactor is Fe cation.

It carries out the reaction S-(5-deoxy-D-ribos-5-yl)-L-homocysteine = (S)-4,5-dihydroxypentane-2,3-dione + L-homocysteine. Functionally, involved in the synthesis of autoinducer 2 (AI-2) which is secreted by bacteria and is used to communicate both the cell density and the metabolic potential of the environment. The regulation of gene expression in response to changes in cell density is called quorum sensing. Catalyzes the transformation of S-ribosylhomocysteine (RHC) to homocysteine (HC) and 4,5-dihydroxy-2,3-pentadione (DPD). This is S-ribosylhomocysteine lyase from Pectobacterium carotovorum subsp. carotovorum (strain PC1).